A 119-amino-acid polypeptide reads, in one-letter code: Large ribosomal subunit protein bL20 (119 aa).

This sequence belongs to the bacterial ribosomal protein bL20 family.

Functionally, binds directly to 23S ribosomal RNA and is necessary for the in vitro assembly process of the 50S ribosomal subunit. It is not involved in the protein synthesizing functions of that subunit. The sequence is that of Large ribosomal subunit protein bL20 from Lactococcus lactis subsp. cremoris (strain MG1363).